The primary structure comprises 875 residues: Ectonucleotide pyrophosphatase/phosphodiesterase family member 3 (875 aa).

Topologically, residues 1–11 are cytoplasmic; it reads MDSRLALATEE. The chain crosses the membrane as a helical; Signal-anchor for type II membrane protein span at residues 12-30; that stretch reads PIKKDSLKRYKILCAVLLA. The Extracellular segment spans residues 31–875; that stretch reads LLVIVSLGLG…TYLPTFETII (845 aa). 2 SMB domains span residues 51–94 and 95–139; these read HIGS…VKST and QIWT…GEVP. 10 disulfide bridges follow: C55/C72, C59/C90, C70/C83, C76/C82, C99/C116, C104/C134, C114/C127, C120/C126, C145/C191, and C153/C365. Positions 79 to 81 match the Cell attachment site motif; sequence RGD. A phosphodiesterase region spans residues 161 to 545; it reads PVILFSMDGF…HGSLNHLLKA (385 aa). Residue D168 participates in Zn(2+) binding. ATP is bound at residue K205. T206 contributes to the Zn(2+) binding site. Residue T206 is the Nucleophile of the active site. ATP is bound at residue N227. N-linked (GlcNAc...) asparagine glycosylation occurs at N237. D276 is an ATP binding site. N280 and N289 each carry an N-linked (GlcNAc...) asparagine glycan. Y290 is a binding site for ATP. The Zn(2+) site is built by D326, H330, D373, and H374. 6 disulfides stabilise this stretch: C381-C478, C429-C818, C562-C623, C575-C679, C577-C664, and C787-C797. H483 provides a ligand contact to Zn(2+). Residues N533, N574, N594, and N702 are each glycosylated (N-linked (GlcNAc...) asparagine). The nuclease stretch occupies residues 582–875; it reads TSGQEEQVNQ…TYLPTFETII (294 aa). Ca(2+)-binding residues include D752, N754, D756, H758, and D760. N-linked (GlcNAc...) asparagine glycosylation occurs at N789.

The protein belongs to the nucleotide pyrophosphatase/phosphodiesterase family. As to quaternary structure, monomer and homodimer. Zn(2+) serves as cofactor. Post-translationally, the N-terminal is blocked. N-glycosylated. N-glycosylation is necessary for normal transport to the cell membrane, but is not the apical targeting signal. In terms of tissue distribution, detected in intestinal epithelium and liver (at protein level).

Its subcellular location is the cell membrane. The protein localises to the apical cell membrane. The protein resides in the secreted. The catalysed reaction is Hydrolytically removes 5'-nucleotides successively from the 3'-hydroxy termini of 3'-hydroxy-terminated oligonucleotides.. It carries out the reaction a ribonucleoside 5'-triphosphate + H2O = a ribonucleoside 5'-phosphate + diphosphate + H(+). The enzyme catalyses ATP + H2O = AMP + diphosphate + H(+). It catalyses the reaction CTP + H2O = CMP + diphosphate + H(+). The catalysed reaction is GTP + H2O = GMP + diphosphate + H(+). It carries out the reaction UTP + H2O = UMP + diphosphate + H(+). The enzyme catalyses UDP-N-acetyl-alpha-D-glucosamine + H2O = N-acetyl-alpha-D-glucosamine 1-phosphate + UMP + 2 H(+). It catalyses the reaction P(1),P(3)-bis(5'-adenosyl) triphosphate + H2O = AMP + ADP + 2 H(+). The catalysed reaction is P(1),P(4)-bis(5'-adenosyl) tetraphosphate + H2O = AMP + ATP + 2 H(+). It carries out the reaction P(1),P(5)-bis(5'-adenosyl) pentaphosphate + H2O = adenosine 5'-tetraphosphate + AMP + 2 H(+). The enzyme catalyses P(1),P(4)-bis(5'-guanosyl) tetraphosphate + H2O = GMP + GTP + 2 H(+). Its function is as follows. Hydrolase that metabolizes extracellular nucleotides, including ATP, GTP, UTP and CTP. Limits mast cells and basophils response during inflammation and during the chronic phases of allergic responses by eliminating extracellular ATP, a signaling molecule activating these cells in an autocrine manner. Metabolizes extracellular ATP in the lumen of the small intestine, and thereby prevents ATP-induced apoptosis of intestinal plasmacytoid dendritic cells. Has a broad specificity and can also hydrolyze UDP-GlcNAc into UMP and GlcNAc-1-phosphate and potentially several other intracellular nucleotide sugars, including UDP-GalNAc, CMP-NeuAc, GDP-Fuc, and UDP-GlcA. Thereby, could modulate glycan biosynthesis and protein glycosylation. Can hydrolyze extracellular dinucleoside polyphosphates, including the vasoactive adenosine polyphosphates as well. In addition, displays an alkaline phosphodiesterase activity in vitro. The polypeptide is Ectonucleotide pyrophosphatase/phosphodiesterase family member 3 (Rattus norvegicus (Rat)).